The sequence spans 401 residues: Large ribosomal subunit protein uL4B (401 aa).

Residues 351 to 373 show a composition bias toward basic and acidic residues; that stretch reads IKAKEKKPDDGKPKAKKPLDAKT. The interval 351-401 is disordered; sequence IKAKEKKPDDGKPKAKKPLDAKTKMIKLAKAKKRQARAEAKTAEAKTAESK. Residues 374–385 are compositionally biased toward basic residues; that stretch reads KMIKLAKAKKRQ. Residues 386-401 show a composition bias toward basic and acidic residues; that stretch reads ARAEAKTAEAKTAESK.

It belongs to the universal ribosomal protein uL4 family. As to quaternary structure, component of the large ribosomal subunit.

It localises to the cytoplasm. Functionally, component of the large ribosomal subunit. The ribosome is a large ribonucleoprotein complex responsible for the synthesis of proteins in the cell. This chain is Large ribosomal subunit protein uL4B (rpl4-b), found in Xenopus laevis (African clawed frog).